We begin with the raw amino-acid sequence, 95 residues long: Putative septation protein SpoVG (95 aa).

Belongs to the SpoVG family.

Could be involved in septation. The sequence is that of Putative septation protein SpoVG from Clostridium botulinum (strain ATCC 19397 / Type A).